Consider the following 113-residue polypeptide: Small ribosomal subunit protein bS6 (113 aa).

It belongs to the bacterial ribosomal protein bS6 family.

Its function is as follows. Binds together with bS18 to 16S ribosomal RNA. In Wigglesworthia glossinidia brevipalpis, this protein is Small ribosomal subunit protein bS6.